A 149-amino-acid polypeptide reads, in one-letter code: Large ribosomal subunit protein uL13 (149 aa).

This sequence belongs to the universal ribosomal protein uL13 family. As to quaternary structure, part of the 50S ribosomal subunit.

Functionally, this protein is one of the early assembly proteins of the 50S ribosomal subunit, although it is not seen to bind rRNA by itself. It is important during the early stages of 50S assembly. The sequence is that of Large ribosomal subunit protein uL13 from Bifidobacterium longum (strain DJO10A).